The chain runs to 258 residues: Isoprenyl transferase 2 (258 aa).

Residues 1-18 (MNFPPIHPSTPKMTPPDL) are compositionally biased toward pro residues. The tract at residues 1–21 (MNFPPIHPSTPKMTPPDLDPQ) is disordered. Aspartate 32 is an active-site residue. Aspartate 32 is a binding site for Mg(2+). Substrate is bound by residues 33-36 (GNGR), tryptophan 37, arginine 45, histidine 49, and 77-79 (STE). Asparagine 80 acts as the Proton acceptor in catalysis. Substrate contacts are provided by residues tryptophan 81, arginine 83, arginine 200, and 206-208 (RLS). Residue glutamate 219 participates in Mg(2+) binding.

The protein belongs to the UPP synthase family. Homodimer. The cofactor is Mg(2+).

Functionally, catalyzes the condensation of isopentenyl diphosphate (IPP) with allylic pyrophosphates generating different type of terpenoids. The protein is Isoprenyl transferase 2 of Nostoc sp. (strain PCC 7120 / SAG 25.82 / UTEX 2576).